A 357-amino-acid polypeptide reads, in one-letter code: uncharacterized protein (357 aa).

Ser-72 carries the post-translational modification Phosphoserine. Disordered stretches follow at residues 79 to 98, 264 to 290, and 323 to 357; these read GVNE…RPSR, QKQL…GASV, and ISDE…EPLK. Positions 324–335 are enriched in acidic residues; it reads SDEDEEDEEEDS.

This is an uncharacterized protein from Saccharomyces cerevisiae (strain ATCC 204508 / S288c) (Baker's yeast).